We begin with the raw amino-acid sequence, 211 residues long: MYQPDFPPVPFRLGLYPVVDSVQWIERLLDAGVRTLQLRIKDRRDEEVEADVVAAIALGRRYNARLFINDYWRLAIKHQAYGVHLGQEDLQATDLNAIRAAGLRLGVSTHDDMEIDVALAARPSYIALGHVFPTQTKQMPSAPQGLEQLARHVERLADYPTVAIGGISLARAPAVIATGVGSIAVVSAITQAADWRLATAQLLEIAGVGDE.

Residues Gln-37–Lys-41 and Asn-69 each bind 4-amino-2-methyl-5-(diphosphooxymethyl)pyrimidine. The Mg(2+) site is built by Asp-70 and Asp-89. Residue Ser-108 coordinates 4-amino-2-methyl-5-(diphosphooxymethyl)pyrimidine. Residue Thr-134–Thr-136 coordinates 2-[(2R,5Z)-2-carboxy-4-methylthiazol-5(2H)-ylidene]ethyl phosphate. 4-amino-2-methyl-5-(diphosphooxymethyl)pyrimidine is bound at residue Lys-137. Residues Gly-166 and Val-186 to Ser-187 each bind 2-[(2R,5Z)-2-carboxy-4-methylthiazol-5(2H)-ylidene]ethyl phosphate.

Belongs to the thiamine-phosphate synthase family. Mg(2+) is required as a cofactor.

It carries out the reaction 2-[(2R,5Z)-2-carboxy-4-methylthiazol-5(2H)-ylidene]ethyl phosphate + 4-amino-2-methyl-5-(diphosphooxymethyl)pyrimidine + 2 H(+) = thiamine phosphate + CO2 + diphosphate. The catalysed reaction is 2-(2-carboxy-4-methylthiazol-5-yl)ethyl phosphate + 4-amino-2-methyl-5-(diphosphooxymethyl)pyrimidine + 2 H(+) = thiamine phosphate + CO2 + diphosphate. It catalyses the reaction 4-methyl-5-(2-phosphooxyethyl)-thiazole + 4-amino-2-methyl-5-(diphosphooxymethyl)pyrimidine + H(+) = thiamine phosphate + diphosphate. It participates in cofactor biosynthesis; thiamine diphosphate biosynthesis; thiamine phosphate from 4-amino-2-methyl-5-diphosphomethylpyrimidine and 4-methyl-5-(2-phosphoethyl)-thiazole: step 1/1. Condenses 4-methyl-5-(beta-hydroxyethyl)thiazole monophosphate (THZ-P) and 2-methyl-4-amino-5-hydroxymethyl pyrimidine pyrophosphate (HMP-PP) to form thiamine monophosphate (TMP). This is Thiamine-phosphate synthase from Escherichia coli (strain SE11).